The following is a 381-amino-acid chain: Creatine kinase B-type (381 aa).

Ser-4 carries the post-translational modification Phosphoserine. The 88-residue stretch at 11–98 (KLRFPAEDEF…FDPIIEDRHG (88 aa)) folds into the Phosphagen kinase N-terminal domain. Position 35 is a phosphothreonine (Thr-35). A Glycyl lysine isopeptide (Lys-Gly) (interchain with G-Cter in ubiquitin) cross-link involves residue Lys-45. Residue Val-72 coordinates creatine. Over residues 96–110 (RHGGYKPSDEHKTDL) the composition is skewed to basic and acidic residues. The tract at residues 96–123 (RHGGYKPSDEHKTDLNPDNLQGGDDLDP) is disordered. Residues Lys-101 and Lys-107 each participate in a glycyl lysine isopeptide (Lys-Gly) (interchain with G-Cter in ubiquitin) cross-link. A Phosphotyrosine modification is found at Tyr-125. One can recognise a Phosphagen kinase C-terminal domain in the interval 125–367 (YVLSSRVRTG…KLLIEMEQRL (243 aa)). Residues 128-132 (SSRVR), Arg-130, Arg-132, and His-191 contribute to the ATP site. The interval 130 to 138 (RVRTGRSIR) is internal MTS-like signal. Ser-199 carries the post-translational modification Phosphoserine. Glu-232 provides a ligand contact to creatine. ATP is bound at residue Arg-236. 3'-nitrotyrosine is present on Tyr-269. Ser-285 contacts creatine. An ATP-binding site is contributed by Arg-292. Ser-309 carries the phosphoserine modification. Residues Arg-320, 320 to 325 (RGTGGV), and Asp-335 each bind ATP. Thr-322 is subject to Phosphothreonine. Lys-381 participates in a covalent cross-link: Glycyl lysine isopeptide (Lys-Gly) (interchain with G-Cter in ubiquitin).

Belongs to the ATP:guanido phosphotransferase family. As to quaternary structure, dimer of identical or non-identical chains, which can be either B (brain type) or M (muscle type). With MM being the major form in skeletal muscle and myocardium, MB existing in myocardium, and BB existing in many tissues, especially brain. Interacts with SLC12A6 (via C-terminus); the interaction may be required for SLC12A6 potassium-chloride cotransport activity. Ubiquitinated by the ECS(ASB9) complex, leading to its degradation by the proteasome.

The protein resides in the cytoplasm. The protein localises to the cytosol. It localises to the mitochondrion. It is found in the cell membrane. It catalyses the reaction creatine + ATP = N-phosphocreatine + ADP + H(+). Its function is as follows. Reversibly catalyzes the transfer of phosphate between ATP and various phosphogens (e.g. creatine phosphate). Creatine kinase isoenzymes play a central role in energy transduction in tissues with large, fluctuating energy demands, such as skeletal muscle, heart, brain and spermatozoa. Acts as a key regulator of adaptive thermogenesis as part of the futile creatine cycle: localizes to the mitochondria of thermogenic fat cells and acts by mediating phosphorylation of creatine to initiate a futile cycle of creatine phosphorylation and dephosphorylation. During the futile creatine cycle, creatine and N-phosphocreatine are in a futile cycle, which dissipates the high energy charge of N-phosphocreatine as heat without performing any mechanical or chemical work. The polypeptide is Creatine kinase B-type (CKB) (Oryctolagus cuniculus (Rabbit)).